We begin with the raw amino-acid sequence, 230 residues long: Interleukin-22 receptor subunit alpha-2 (230 aa).

Residues 1 to 20 (MMPKHCLLGLLIILLSSATE) form the signal peptide. Fibronectin type-III domains follow at residues 29–128 (TPQK…TKLD) and 129–230 (PPVV…VHIP). Intrachain disulfides connect C77–C85 and C205–C226.

The protein belongs to the type II cytokine receptor family. In terms of tissue distribution, highly expressed in lymph nodes and at lower levels in lung, spleen, and thymus. Not expressed in kidney, liver and heart.

It localises to the secreted. In terms of biological role, receptor for IL22. Binds to IL22, prevents interaction with the functional IL-22R complex and blocks the activity of IL22 (in vitro). May play an important role as an IL22 antagonist in the regulation of inflammatory responses. The polypeptide is Interleukin-22 receptor subunit alpha-2 (Il22ra2) (Mus musculus (Mouse)).